The primary structure comprises 501 residues: Postreplication repair E3 ubiquitin-protein ligase rad18 (501 aa).

The RING-type zinc finger occupies 34–72 (CHVCKDFYDSPMLTSCNHTFCSLCIRRCLSVDSKCPLCR). Residues 111–154 (QAILPDQAGPSSPSKRKATEMEGPKEEDPESKRPRRSTRSTRAR) form a disordered region. Residues 127–142 (KATEMEGPKEEDPESK) show a composition bias toward basic and acidic residues. The span at 143 to 152 (RPRRSTRSTR) shows a compositional bias: basic residues. The segment at 186 to 214 (LVACPICLTRMKEQQVDRHLDTSCPGSPQ) adopts a UBZ4-type zinc-finger fold. Zn(2+) contacts are provided by C189, C192, H204, and C209. The segment at 203 to 250 (RHLDTSCPGSPQAASKRRPIPAQTPQPSTFPSFNTRLTSQTNQKPPER) is disordered. Residues 225-246 (QTPQPSTFPSFNTRLTSQTNQK) are compositionally biased toward polar residues. The SAP domain occupies 256-290 (YSMLRDTALRKKLSELGLSTHGSRQLLEKRHKEWI). Residues 377 to 501 (IKRQTLDGNG…GMKKPNPETC (125 aa)) are disordered.

This sequence belongs to the RAD18 family. In terms of assembly, interacts with E2 mus-8/ubc2, forming a complex with ubiquitin ligase activity.

The protein resides in the nucleus. The catalysed reaction is S-ubiquitinyl-[E2 ubiquitin-conjugating enzyme]-L-cysteine + [acceptor protein]-L-lysine = [E2 ubiquitin-conjugating enzyme]-L-cysteine + N(6)-ubiquitinyl-[acceptor protein]-L-lysine.. The protein operates within protein modification; protein ubiquitination. Functionally, E3 RING-finger protein, member of the UBC2/RAD6 epistasis group. Associates to the E2 ubiquitin conjugating enzyme mus-8/ubc2 to form the mus-8/ubc2-uvs-2/rad18 ubiquitin ligase complex involved in postreplicative repair (PRR) of damaged DNA. The sequence is that of Postreplication repair E3 ubiquitin-protein ligase rad18 (uvs-2) from Neurospora crassa (strain ATCC 24698 / 74-OR23-1A / CBS 708.71 / DSM 1257 / FGSC 987).